Here is a 181-residue protein sequence, read N- to C-terminus: Adenylate kinase (181 aa).

10–15 lines the ATP pocket; that stretch reads GAGKGT. An NMP region spans residues 30–59; that stretch reads STGELFRRNIEEGTKLGVEAKRYLDAGDLV. AMP-binding positions include T31, R36, 57 to 59, 85 to 88, and Q92; these read DLV and GYPR. An LID region spans residues 126–132; the sequence is GRGRADD. Position 127 (R127) interacts with ATP. The AMP site is built by R129 and R140. G166 contacts ATP.

Belongs to the adenylate kinase family. Monomer.

The protein resides in the cytoplasm. It catalyses the reaction AMP + ATP = 2 ADP. The protein operates within purine metabolism; AMP biosynthesis via salvage pathway; AMP from ADP: step 1/1. Catalyzes the reversible transfer of the terminal phosphate group between ATP and AMP. Plays an important role in cellular energy homeostasis and in adenine nucleotide metabolism. The chain is Adenylate kinase from Mycobacterium tuberculosis (strain ATCC 25177 / H37Ra).